A 443-amino-acid polypeptide reads, in one-letter code: MTQTWNLLQAGQERNYKVAYINARIIDPETKLDIEGSLLTEGSKIIDFGESLFSNGVPSGVDETINCEGLVLMPGLVDIHVHFREPGQEHKETIYTGSKSAAAGGVTTVVCQPNTTPAIDSVILAKYLKYRALETSHVNIEFYAKITTSEEKLTEVALLKEAGAVGFTDDGIPVMNPMIMRQALLYSSMLNVPIAQHAEDLNLSAGGAINEGKISEALGVKGILSASESVMVSRDILLMKDIENVHYHILHISSKDSLDAVKRAKDLGLNVTCEVTPHHFTLTEDIVKQHGAIAKMNPPLRTEEDRLAMVEGLKTGVIDCIATDHAPHDRSSKDLPLESAAFGIVGLETMLPLSLELYHSGQIDLFDILAKLTYKPADIIHVPRGRVQKNFVADLTLVDLNYEWEIKIDSFASKSKNSPFGGRKVKGRVVRTIVSGKTVYSQK.

Zn(2+) is bound by residues His80 and His82. Residues 82–84 (HFR) and Asn114 each bind substrate. Residues Asp170, His197, and His251 each contribute to the Zn(2+) site. Asn297 lines the substrate pocket. Residue Asp324 coordinates Zn(2+). Asp324 is an active-site residue. Residues His328 and 342 to 343 (FG) contribute to the substrate site.

Belongs to the metallo-dependent hydrolases superfamily. DHOase family. Class I DHOase subfamily. Zn(2+) is required as a cofactor.

It catalyses the reaction (S)-dihydroorotate + H2O = N-carbamoyl-L-aspartate + H(+). The protein operates within pyrimidine metabolism; UMP biosynthesis via de novo pathway; (S)-dihydroorotate from bicarbonate: step 3/3. In terms of biological role, catalyzes the reversible cyclization of carbamoyl aspartate to dihydroorotate. The protein is Dihydroorotase of Wolbachia sp. subsp. Brugia malayi (strain TRS).